Reading from the N-terminus, the 367-residue chain is Cytochrome b (367 aa).

A run of 4 helical transmembrane segments spans residues 25-45, 69-90, 105-125, and 170-190; these read FGSMLLTCLILQTSTGFFLAI, WIMQNTHAIGASMFFICIYIHI, WLSGTALLIILMATAFFGYVL, and FFALHFILPFLIISLSSIHII. Residues His-75 and His-89 each coordinate heme b. Positions 174 and 188 each coordinate heme b. Residue His-193 participates in a ubiquinone binding. Transmembrane regions (helical) follow at residues 218–238, 280–300, 312–332, and 339–358; these read YKDVLMVTIMITILFTIMSFT, LGGTLALLMSVIILTTAPFTH, LTQALFWTLIVTFITITWTAT, and FIFISQMASAIYFSFFIINP.

The protein belongs to the cytochrome b family. As to quaternary structure, the cytochrome bc1 complex contains 3 respiratory subunits (MT-CYB, CYC1 and UQCRFS1), 2 core proteins (UQCRC1 and UQCRC2) and probably 6 low-molecular weight proteins. Heme b is required as a cofactor.

The protein resides in the mitochondrion inner membrane. Functionally, component of the ubiquinol-cytochrome c reductase complex (complex III or cytochrome b-c1 complex) that is part of the mitochondrial respiratory chain. The b-c1 complex mediates electron transfer from ubiquinol to cytochrome c. Contributes to the generation of a proton gradient across the mitochondrial membrane that is then used for ATP synthesis. This Austrelaps superbus (Lowland copperhead snake) protein is Cytochrome b (MT-CYB).